A 3073-amino-acid polypeptide reads, in one-letter code: Adhesion G-protein coupled receptor G4 (3073 aa).

The signal sequence occupies residues 1 to 25 (MRKHILHQRLCGLILVSSFIFLTDS). Topologically, residues 26-2691 (LSLKGKRLDF…RSTVDAVNER (2666 aa)) are extracellular. The region spanning 29-228 (KGKRLDFYGE…SPTVDRRLRC (200 aa)) is the Pentraxin (PTX) domain. Disulfide bonds link Cys58/Cys123 and Cys200/Cys228. Asn233 carries N-linked (GlcNAc...) asparagine glycosylation. The tract at residues 253-272 (SQTTGLNPHKTSHSSTLLPE) is disordered. N-linked (GlcNAc...) asparagine glycosylation is present at Asn662. 2 stretches are compositionally biased toward polar residues: residues 671–696 (GNATNRDHSSMTTNVSPIEASTESKV) and 929–951 (GNSASSPNSASTQALPELPSSST). 2 disordered regions span residues 671–697 (GNATNRDHSSMTTNVSPIEASTESKVT) and 924–951 (SEKSKGNSASSPNSASTQALPELPSSST). 3 N-linked (GlcNAc...) asparagine glycosylation sites follow: Asn1141, Asn1304, and Asn1495. Disordered regions lie at residues 1565-1595 (FTSSSSLPPKATKTTQASTLNTTPVAHAGPT), 1741-1760 (TLTNSKVTPRPTESVKSTPT), and 1945-1972 (ITLSSNPSVNSRATSPTWSSSSLPSDSR). The segment covering 1945–1954 (ITLSSNPSVN) has biased composition (polar residues). Residues 1955 to 1972 (SRATSPTWSSSSLPSDSR) show a composition bias toward low complexity. One can recognise a GAIN-B domain in the interval 2535–2684 (SSEEVIAPQI…GVLMDLSRST (150 aa)). Cystine bridges form between Cys2635–Cys2666 and Cys2654–Cys2668. Residues 2635–2684 (CAFWDFDTNNGLGGWNPSGCKLKESNINYTICQCNHLTHFGVLMDLSRST) are GPS. Residues 2673–2684 (HFGVLMDLSRST) are stachel. The helical transmembrane segment at 2692–2712 (ILVIITYTGCGISSIFLGIAM) threads the bilayer. Topologically, residues 2713–2728 (VTYIAFHKLRKDYPSK) are cytoplasmic. A helical transmembrane segment spans residues 2729-2749 (ILINLCTALLMLNLAFLVNSW). The Extracellular segment spans residues 2750–2755 (LTSFQK). The chain crosses the membrane as a helical span at residues 2756 to 2776 (VGLCITAAVALHYFLLVSLTW). Cysteines 2759 and 2836 form a disulfide. At 2777–2798 (MGLEAVHMYFALVKVFNTYIPN) the chain is on the cytoplasmic side. A helical transmembrane segment spans residues 2799-2819 (YILKFCLAGWGIPAITVAIIL). Topologically, residues 2820-2842 (SVRKDLYGTLSPTTPFCWIKDDH) are extracellular. A helical transmembrane segment spans residues 2843 to 2863 (IFYISVVAYFCLIFLMNLSMF). The Cytoplasmic portion of the chain corresponds to 2864–2892 (CTVLVQLTSVKSQSQKTRKKMILNDLKGT). The helical transmembrane segment at 2893 to 2913 (ISLTFLLGLTWGFAFFAWGPV) threads the bilayer. Position 2914 (Arg2914) is a topological domain, extracellular. The chain crosses the membrane as a helical span at residues 2915–2935 (IFFLYLFAICNTLQGFLIFVF). Residues 2936 to 3073 (YCVMKESVRE…SSGLGEMFNL (138 aa)) lie on the Cytoplasmic side of the membrane.

This sequence belongs to the G-protein coupled receptor 2 family. Adhesion G-protein coupled receptor (ADGR) subfamily. As to quaternary structure, homodimer; homodimerizes via its Pentraxin domain in a calcium-independent manner. Heterodimer of 2 chains generated by proteolytic processing; the large extracellular N-terminal fragment and the membrane-bound C-terminal fragment predominantly remain associated and non-covalently linked. Autoproteolytically processed at the GPS region of the GAIN-B domain; this cleavage modulates receptor activity.

The protein localises to the membrane. Forms a heterodimer of 2 chains generated by proteolytic processing that remain associated through non-covalent interactions mediated by the GAIN-B domain. In the inactivated receptor, the Stachel sequence (also named stalk) is embedded in the GAIN-B domain, where it adopts a beta-strand conformation. On activation, the Stachel moves into the 7 transmembrane region and adopts a twisted hook-shaped configuration that forms contacts within the receptor, leading to coupling of a G-alpha protein, which activates signaling. The cleaved GAIN-B and N-terminal domains can then dissociate from the rest of the receptor. Functionally, orphan adhesion G-protein coupled receptor (aGPCR). Ligand binding causes a conformation change that triggers signaling via guanine nucleotide-binding proteins (G proteins) and modulates the activity of downstream effectors, such as adenylate cyclase. ADGRG4 is coupled to G(s) G proteins and mediates activation of adenylate cyclase activity. May be act as sensor of mechanical forces. This is Adhesion G-protein coupled receptor G4 from Mus musculus (Mouse).